Here is a 298-residue protein sequence, read N- to C-terminus: Rhodomycin D methylesterase DauP (298 aa).

An AB hydrolase-1 domain is found at 25–277 (PLLLIAGGNL…VEIENMGHAL (253 aa)).

The protein belongs to the methyl esterase DnrP family.

The catalysed reaction is rhodomycin D + H2O = 10-carboxy-13-deoxycarminomycin + methanol + H(+). The enzyme catalyses 4-O-methylrhodomycin D + H2O = 10-carboxy-13-deoxydaunorubicin + methanol + H(+). Its pathway is antibiotic biosynthesis; daunorubicin biosynthesis. It functions in the pathway antibiotic biosynthesis; carminomycin biosynthesis. In terms of biological role, involved in the biosynthesis of the anthracyclines carminomycin and daunorubicin (daunomycin) which are aromatic polyketide antibiotics that exhibit high cytotoxicity and are widely applied in the chemotherapy of a variety of cancers. Catalyzes the removal of methyl group from the carbomethoxy group of rhodomycin D (10-carbomethoxy-13-deoxycarminomycin) and 4-O-methylrhodomycin D to yield 10-carboxy-13-deoxycarminomycin and 10-carboxy-13-deoxydaunorubicin, respectively. Could be also involved in the decarboxylation of 10-carboxy-13-deoxycarminomycin and 10-carboxy-13-deoxydaunorubicin to yield 13-deoxycarminomycin and 13-deoxydaunorubicin, respectively. It seems that DauK may influence the ability of DauP to carry out the decarboxylation. The polypeptide is Rhodomycin D methylesterase DauP (dauP) (Streptomyces sp. (strain C5)).